The sequence spans 640 residues: 1,4-alpha-glucan branching enzyme GlgB (640 aa).

Catalysis depends on aspartate 317, which acts as the Nucleophile. Residue glutamate 370 is the Proton donor of the active site.

This sequence belongs to the glycosyl hydrolase 13 family. GlgB subfamily. As to quaternary structure, monomer.

It catalyses the reaction Transfers a segment of a (1-&gt;4)-alpha-D-glucan chain to a primary hydroxy group in a similar glucan chain.. Its pathway is glycan biosynthesis; glycogen biosynthesis. Functionally, catalyzes the formation of the alpha-1,6-glucosidic linkages in glycogen by scission of a 1,4-alpha-linked oligosaccharide from growing alpha-1,4-glucan chains and the subsequent attachment of the oligosaccharide to the alpha-1,6 position. This Nitratidesulfovibrio vulgaris (strain DP4) (Desulfovibrio vulgaris) protein is 1,4-alpha-glucan branching enzyme GlgB.